The primary structure comprises 96 residues: Small ribosomal subunit protein bS6 (96 aa).

Belongs to the bacterial ribosomal protein bS6 family.

Its function is as follows. Binds together with bS18 to 16S ribosomal RNA. In Bacillus cereus (strain G9842), this protein is Small ribosomal subunit protein bS6.